The sequence spans 137 residues: Putative pre-16S rRNA nuclease (137 aa).

It belongs to the YqgF nuclease family.

It is found in the cytoplasm. In terms of biological role, could be a nuclease involved in processing of the 5'-end of pre-16S rRNA. This chain is Putative pre-16S rRNA nuclease, found in Flavobacterium psychrophilum (strain ATCC 49511 / DSM 21280 / CIP 103535 / JIP02/86).